Reading from the N-terminus, the 126-residue chain is Aspartate 1-decarboxylase (126 aa).

Serine 25 (schiff-base intermediate with substrate; via pyruvic acid) is an active-site residue. A Pyruvic acid (Ser) modification is found at serine 25. Threonine 57 lines the substrate pocket. Catalysis depends on tyrosine 58, which acts as the Proton donor. Substrate is bound at residue 73–75; that stretch reads GAA.

The protein belongs to the PanD family. In terms of assembly, heterooctamer of four alpha and four beta subunits. It depends on pyruvate as a cofactor. Post-translationally, is synthesized initially as an inactive proenzyme, which is activated by self-cleavage at a specific serine bond to produce a beta-subunit with a hydroxyl group at its C-terminus and an alpha-subunit with a pyruvoyl group at its N-terminus.

The protein resides in the cytoplasm. It catalyses the reaction L-aspartate + H(+) = beta-alanine + CO2. The protein operates within cofactor biosynthesis; (R)-pantothenate biosynthesis; beta-alanine from L-aspartate: step 1/1. Its function is as follows. Catalyzes the pyruvoyl-dependent decarboxylation of aspartate to produce beta-alanine. This is Aspartate 1-decarboxylase from Psychrobacter arcticus (strain DSM 17307 / VKM B-2377 / 273-4).